Here is a 441-residue protein sequence, read N- to C-terminus: Methylenetetrahydrofolate--tRNA-(uracil-5-)-methyltransferase TrmFO (441 aa).

Residue 7 to 12 (GAGLSG) coordinates FAD.

This sequence belongs to the MnmG family. TrmFO subfamily. FAD serves as cofactor.

Its subcellular location is the cytoplasm. It carries out the reaction uridine(54) in tRNA + (6R)-5,10-methylene-5,6,7,8-tetrahydrofolate + NADH + H(+) = 5-methyluridine(54) in tRNA + (6S)-5,6,7,8-tetrahydrofolate + NAD(+). It catalyses the reaction uridine(54) in tRNA + (6R)-5,10-methylene-5,6,7,8-tetrahydrofolate + NADPH + H(+) = 5-methyluridine(54) in tRNA + (6S)-5,6,7,8-tetrahydrofolate + NADP(+). Functionally, catalyzes the folate-dependent formation of 5-methyl-uridine at position 54 (M-5-U54) in all tRNAs. The protein is Methylenetetrahydrofolate--tRNA-(uracil-5-)-methyltransferase TrmFO of Pseudothermotoga lettingae (strain ATCC BAA-301 / DSM 14385 / NBRC 107922 / TMO) (Thermotoga lettingae).